Reading from the N-terminus, the 103-residue chain is Large ribosomal subunit protein bL21 (103 aa).

This sequence belongs to the bacterial ribosomal protein bL21 family. In terms of assembly, part of the 50S ribosomal subunit. Contacts protein L20.

Its function is as follows. This protein binds to 23S rRNA in the presence of protein L20. The polypeptide is Large ribosomal subunit protein bL21 (Shewanella sp. (strain ANA-3)).